The chain runs to 806 residues: Leucine--tRNA ligase (806 aa).

The 'HIGH' region signature appears at 40 to 51 (PYPSGTGLHVGH). The 'KMSKS' region motif lies at 576–580 (KMSKS). K579 contacts ATP.

This sequence belongs to the class-I aminoacyl-tRNA synthetase family.

The protein resides in the cytoplasm. It carries out the reaction tRNA(Leu) + L-leucine + ATP = L-leucyl-tRNA(Leu) + AMP + diphosphate. In Prosthecochloris aestuarii (strain DSM 271 / SK 413), this protein is Leucine--tRNA ligase.